A 352-amino-acid chain; its full sequence is Ion-translocating oxidoreductase complex subunit D (352 aa).

4 consecutive transmembrane segments (helical) span residues 20 to 40, 42 to 62, 69 to 91, and 123 to 143; these read IMLLVVIAALPGIAAQTWFFG, GTLFQIVLAAITALVAEAIVL, VASHLQDYSALLTGLLLAVSIPP, and PAMIGYVVLLISFPVQMTSWL. T187 is modified (FMN phosphoryl threonine). 5 helical membrane-spanning segments follow: residues 215–235, 242–262, 267–287, 301–321, and 322–342; these read LAGVGWQWVNLAWLVGGVFLL, WHIPVSFLLTLALCAALGWLF, LASPQLHLLSGATMLGAFFIL, LIFGALAGVLVWLIRSFGGYP, and DGVAFAVLLANITVPLIDYYT.

Belongs to the NqrB/RnfD family. In terms of assembly, the complex is composed of six subunits: RsxA, RsxB, RsxC, RsxD, RsxE and RsxG. It depends on FMN as a cofactor.

The protein resides in the cell inner membrane. Its function is as follows. Part of a membrane-bound complex that couples electron transfer with translocation of ions across the membrane. Required to maintain the reduced state of SoxR. This is Ion-translocating oxidoreductase complex subunit D from Salmonella agona (strain SL483).